We begin with the raw amino-acid sequence, 832 residues long: MAAAPPPPPPPQLQSSDPSTPPQETSQVRKGKKSRGAKKPRRAAAAAAASTSSAGTMVEDPFLVLAGGKEGGFLELEEIDEADFGIFGGAVEDLGEIDRKAGKDQKKKKRKKRKRGDDDYALPGDGDLVVECEEEGEKGEKRVKKKRRSRKKRKVKEMEEKMESKEDVSDDNVEDMQDGNDMEQDNNDGLILGEDEVYAWRELRLHPLLITAVRRLGFKEPTPIQKACFPAAAHQGKDVIGAAETGSGKTLAFGLPILQRLLEEQEKAMRLSREDESTQDENSRESPLRALILTPTRELAKQVCDHLKEAAKFLRIQVVPIVGGLSMEKQERLLKRKPEIVVGTPGRLWELMSTGNQHLIKLHSLSFFVLDEADRMIERGHFHELQSIIEMLPVTNGSDEQTVGTTPSCETVPILQIKKRQTFVFSATLALSANFRKKLKRGLVTAKASASTDLSSIEALSKQARMKPNAEIVDLTKASILPEKLEESFIECSDDDKDAYLYYILSVHGQGRTIIFCTSIAALRHLSSILRVLGINVLTNHAQMQQRARMKAVDRFRESENSILVATDGFARGMDFDDVRTVIHYQLPHSTDVYIHRSGRTARKSMAGCSIALISPADKAKFYSLCKSLSKENLQQFPVDHAYMPAVMNRLTLARQIDKITRKNSQENANKSWLQRNAESMGLLLETSDSEEERVQGHKQRKATSANLQKLQQDLSELLQRPLQPKTFSRRYLAGAGVSPLLQKQLEELSKRNVKGSASVNANKGSRFVVIGQDQIEPLQALQNSGQEVCVSIDKQREKRRLAENWRRKKQKEKKSTREQKRKEKRIAKERD.

A compositionally biased stretch (pro residues) spans 1-12 (MAAAPPPPPPPQ). Disordered stretches follow at residues 1–59 (MAAA…TMVE) and 91–173 (VEDL…DDNV). The segment covering 29–42 (RKGKKSRGAKKPRR) has biased composition (basic residues). Over residues 43-55 (AAAAAAASTSSAG) the composition is skewed to low complexity. A compositionally biased stretch (basic residues) spans 105 to 114 (QKKKKRKKRK). Over residues 128–137 (LVVECEEEGE) the composition is skewed to acidic residues. Over residues 141 to 155 (KRVKKKRRSRKKRKV) the composition is skewed to basic residues. Residues 156 to 167 (KEMEEKMESKED) are compositionally biased toward basic and acidic residues. The Q motif signature appears at 198–226 (YAWRELRLHPLLITAVRRLGFKEPTPIQK). Residues 230-447 (PAAAHQGKDV…KLKRGLVTAK (218 aa)) form the Helicase ATP-binding domain. ATP is bound at residue 243–250 (AETGSGKT). The DEAD box signature appears at 371-374 (DEAD). In terms of domain architecture, Helicase C-terminal spans 484 to 645 (KLEESFIECS…QFPVDHAYMP (162 aa)). Positions 800–832 (RRLAENWRRKKQKEKKSTREQKRKEKRIAKERD) are disordered. Basic and acidic residues predominate over residues 814–832 (KKSTREQKRKEKRIAKERD).

It belongs to the DEAD box helicase family. DDX24/MAK5 subfamily.

The enzyme catalyses ATP + H2O = ADP + phosphate + H(+). The sequence is that of DEAD-box ATP-dependent RNA helicase 13 from Oryza sativa subsp. japonica (Rice).